A 670-amino-acid polypeptide reads, in one-letter code: Acetyl-coenzyme A synthetase (670 aa).

CoA is bound by residues 205 to 208 and threonine 326; that span reads RRGR. Residues 402-404, 426-431, aspartate 517, arginine 532, and arginine 543 contribute to the ATP site; these read GEP and STWWMT. The Mg(2+) site is built by histidine 556 and valine 559. Arginine 601 serves as a coordination point for CoA. N6-acetyllysine is present on lysine 626.

This sequence belongs to the ATP-dependent AMP-binding enzyme family. Mg(2+) is required as a cofactor. Post-translationally, acetylated. Deacetylation by the SIR2-homolog deacetylase activates the enzyme.

The enzyme catalyses acetate + ATP + CoA = acetyl-CoA + AMP + diphosphate. Its function is as follows. Catalyzes the conversion of acetate into acetyl-CoA (AcCoA), an essential intermediate at the junction of anabolic and catabolic pathways. AcsA undergoes a two-step reaction. In the first half reaction, AcsA combines acetate with ATP to form acetyl-adenylate (AcAMP) intermediate. In the second half reaction, it can then transfer the acetyl group from AcAMP to the sulfhydryl group of CoA, forming the product AcCoA. The chain is Acetyl-coenzyme A synthetase from Pyrobaculum aerophilum (strain ATCC 51768 / DSM 7523 / JCM 9630 / CIP 104966 / NBRC 100827 / IM2).